The following is a 102-amino-acid chain: Complement inhibitor RaCI6 (102 aa).

The first 24 residues, 1 to 24 (MAALNGLVLLLLTISAMFISECYS), serve as a signal peptide directing secretion. 2 disulfides stabilise this stretch: Cys-37–Cys-61 and Cys-42–Cys-63.

It belongs to the RaCI family. As to expression, expressed in salivary glands.

It localises to the secreted. In terms of biological role, complement inhibitor. Prevents complement-mediated C5 activation by binding to C5. Binds C5 at a different binding site than the other tick complement inhibitors OmCI and CirpT1, and the drug eculizumab. This chain is Complement inhibitor RaCI6, found in Dermacentor andersoni (Rocky mountain wood tick).